The primary structure comprises 275 residues: Penicillin-insensitive murein endopeptidase (275 aa).

A signal peptide spans 1-19 (MKKWIAGLLALIAISPVMA). Cystine bridges form between cysteine 44/cysteine 264, cysteine 187/cysteine 235, and cysteine 216/cysteine 223. The Zn(2+) site is built by histidine 110, histidine 113, aspartate 120, aspartate 147, and histidine 211. The segment at 234–262 (GCGAELESWFQPHQPSAKPGKTLPPPLPP) is disordered.

Belongs to the peptidase M74 family. In terms of assembly, dimer. Zn(2+) serves as cofactor.

The protein localises to the periplasm. In terms of biological role, murein endopeptidase that cleaves the D-alanyl-meso-2,6-diamino-pimelyl amide bond that connects peptidoglycan strands. Likely plays a role in the removal of murein from the sacculus. This chain is Penicillin-insensitive murein endopeptidase, found in Yersinia enterocolitica serotype O:8 / biotype 1B (strain NCTC 13174 / 8081).